The following is a 245-amino-acid chain: DNA polymerase sliding clamp 1 (245 aa).

The protein belongs to the PCNA family. As to quaternary structure, homotrimer. The subunits circularize to form a toroid; DNA passes through its center. Replication factor C (RFC) is required to load the toroid on the DNA.

Its function is as follows. Sliding clamp subunit that acts as a moving platform for DNA processing. Responsible for tethering the catalytic subunit of DNA polymerase and other proteins to DNA during high-speed replication. The chain is DNA polymerase sliding clamp 1 from Sulfurisphaera ohwakuensis.